The chain runs to 1000 residues: Chromosome transmission fidelity protein 18 homolog (1000 aa).

3 disordered regions span residues 53–89 (SAGD…RDAS), 130–159 (AGNS…DSKF), and 272–301 (EFGE…SHSL). Over residues 60–70 (SNANSKPTGDS) the composition is skewed to polar residues. Residues 272–295 (EFGENDSEILENDDNAGEEDDEDE) are compositionally biased toward acidic residues. Residue 396–403 (GPPGLGKT) participates in ATP binding. Residues 888-898 (ARNAGRDNTTA) show a composition bias toward polar residues. The segment at 888–916 (ARNAGRDNTTAAAAVKTADPKGAKSAAKP) is disordered.

Belongs to the activator 1 small subunits family. CTF18 subfamily. In terms of assembly, component of the CTF18-RFC complex, which consists of ctf18, ctf8, dcc1, rfc2, rfc3, rfc4 and rfc5. The CTF18-RFC complex associates with pcna.

It is found in the nucleus. Functionally, chromosome cohesion factor involved in sister chromatid cohesion and fidelity of chromosome transmission. Component of one of the cell nuclear antigen loader complexes, CTF18-replication factor C (CTF18-RFC), which consists of ctf18, ctf8, dcc1, rfc2, rfc3, rfc4 and rfc5. The CTF18-RFC complex binds to single-stranded and primed DNAs and has weak ATPase activity that is stimulated by the presence of primed DNA, replication protein A (RPA) and by proliferating cell nuclear antigen (pcna). The CTF18-RFC complex catalyzes the ATP-dependent loading of pcna onto primed and gapped DNA. The sequence is that of Chromosome transmission fidelity protein 18 homolog (chtf18) from Xenopus laevis (African clawed frog).